The chain runs to 324 residues: Viral cathepsin (324 aa).

The signal sequence occupies residues 1-18; the sequence is MNKIVLYLLIYVGTFSAA. Positions 19–113 are cleaved as a propeptide — activation peptide; it reads YDLLKAPSYF…VVLNRPPDKG (95 aa). Intrachain disulfides connect C134–C175, C168–C208, and C263–C311. C137 is a catalytic residue. N159 carries N-linked (GlcNAc...) asparagine; by host glycosylation. Residues H270 and N290 contribute to the active site.

This sequence belongs to the peptidase C1 family. Post-translationally, synthesized as an inactive proenzyme and activated by proteolytic removal of the inhibitory propeptide.

It carries out the reaction Endopeptidase of broad specificity, hydrolyzing substrates of both cathepsin L and cathepsin B.. Cysteine protease that plays an essential role in host liquefaction to facilitate horizontal transmission of the virus. May participate in the degradation of foreign protein expressed by the baculovirus system. In Choristoneura fumiferana defective polyhedrosis virus (Cfdef), this protein is Viral cathepsin (Vcath).